The sequence spans 750 residues: Rho GTPase-activating protein 9 (750 aa).

Positions 22 to 88 (PRGSQLCALY…PAAYMIEESI (67 aa)) constitute an SH3 domain. 2 disordered regions span residues 120–187 (ALPS…LMSE) and 242–319 (WKPP…LLDD). Over residues 163–180 (RSLSQEDLPSEASASTAG) the composition is skewed to polar residues. Positions 213-247 (LQRLDAWEQHLDPNSGRCFYINSLTGCKSWKPPRR) constitute a WW domain. Polar residues-rich tracts occupy residues 251 to 270 (ETNPGSMEGTQTLKRNNDVL) and 291 to 300 (GSLSLSQRTS). A compositionally biased stretch (low complexity) spans 301–317 (QLDPPALQAPRPLPQLL). The 114-residue stretch at 322 to 435 (EVEKSGLLNM…WHRALRTVIE (114 aa)) folds into the PH domain. 3 lipid binding regions span residues 342 to 345 (RKNW), 397 to 399 (SSR), and 432 to 669 (TVIE…CLSQ). Basic and acidic residues predominate over residues 446–462 (EAPTGRDQGSGDRENPL). A disordered region spans residues 446 to 488 (EAPTGRDQGSGDRENPLELRLSGSGPAELSAGEDEEEESELVS). Position 475 is a phosphoserine (serine 475). Residues 476-485 (AGEDEEEESE) show a composition bias toward acidic residues. Serine 500 carries the post-translational modification Phosphoserine. The Rho-GAP domain maps to 542 to 749 (CQLESLCQRE…LMLTNFTSLF (208 aa)).

As to quaternary structure, interacts with FASLG. In terms of tissue distribution, predominantly expressed in peripheral blood leukocytes, spleen, and thymus.

Functionally, GTPase activator for the Rho-type GTPases by converting them to an inactive GDP-bound state. Has a substantial GAP activity toward CDC42 and RAC1 and less toward RHOA. Has a role in regulating adhesion of hematopoietic cells to the extracellular matrix. Binds phosphoinositides, and has the highest affinity for phosphatidylinositol 3,4,5-trisphosphate, followed by phosphatidylinositol 3,4-bisphosphate and phosphatidylinositol 4,5-bisphosphate. This Homo sapiens (Human) protein is Rho GTPase-activating protein 9 (ARHGAP9).